The chain runs to 80 residues: Exodeoxyribonuclease 7 small subunit (80 aa).

The protein belongs to the XseB family. As to quaternary structure, heterooligomer composed of large and small subunits.

It localises to the cytoplasm. The enzyme catalyses Exonucleolytic cleavage in either 5'- to 3'- or 3'- to 5'-direction to yield nucleoside 5'-phosphates.. Bidirectionally degrades single-stranded DNA into large acid-insoluble oligonucleotides, which are then degraded further into small acid-soluble oligonucleotides. The chain is Exodeoxyribonuclease 7 small subunit from Pseudomonas fluorescens (strain ATCC BAA-477 / NRRL B-23932 / Pf-5).